A 573-amino-acid chain; its full sequence is CTP synthase (573 aa).

Residues 1–281 (MGQTRIQART…DAYVVRRLGL (281 aa)) are amidoligase domain. Ser-23 is a CTP binding site. Position 23 (Ser-23) interacts with UTP. ATP-binding positions include 24–29 (SLGKGL) and Asp-81. Residues Asp-81 and Glu-155 each coordinate Mg(2+). Residues 162–164 (DIE), 202–207 (KTKPTQ), and Lys-238 contribute to the CTP site. UTP contacts are provided by residues 202–207 (KTKPTQ) and Lys-238. The Glutamine amidotransferase type-1 domain occupies 306 to 554 (EVALVGKYVD…IAAALKYKLA (249 aa)). L-glutamine is bound at residue Gly-369. The Nucleophile; for glutamine hydrolysis role is filled by Cys-396. L-glutamine contacts are provided by residues 397-400 (LGLQ), Glu-419, and Arg-480. Residues His-527 and Glu-529 contribute to the active site.

This sequence belongs to the CTP synthase family. As to quaternary structure, homotetramer.

The enzyme catalyses UTP + L-glutamine + ATP + H2O = CTP + L-glutamate + ADP + phosphate + 2 H(+). It catalyses the reaction L-glutamine + H2O = L-glutamate + NH4(+). It carries out the reaction UTP + NH4(+) + ATP = CTP + ADP + phosphate + 2 H(+). It participates in pyrimidine metabolism; CTP biosynthesis via de novo pathway; CTP from UDP: step 2/2. Its activity is regulated as follows. Allosterically activated by GTP, when glutamine is the substrate; GTP has no effect on the reaction when ammonia is the substrate. The allosteric effector GTP functions by stabilizing the protein conformation that binds the tetrahedral intermediate(s) formed during glutamine hydrolysis. Inhibited by the product CTP, via allosteric rather than competitive inhibition. Catalyzes the ATP-dependent amination of UTP to CTP with either L-glutamine or ammonia as the source of nitrogen. Regulates intracellular CTP levels through interactions with the four ribonucleotide triphosphates. This Nocardia farcinica (strain IFM 10152) protein is CTP synthase.